We begin with the raw amino-acid sequence, 123 residues long: Succinate dehydrogenase hydrophobic membrane anchor subunit (123 aa).

Topologically, residues methionine 1–asparagine 13 are cytoplasmic. A helical membrane pass occupies residues arginine 14–valine 34. The Extracellular segment spans residues alanine 35–leucine 59. A helical membrane pass occupies residues alanine 60 to valine 81. Histidine 72 lines the heme pocket. The Cytoplasmic portion of the chain corresponds to alanine 82–lysine 91. The helical transmembrane segment at arginine 92–valine 116 threads the bilayer.

As to quaternary structure, part of an enzyme complex containing four subunits: a flavoprotein, an iron-sulfur protein, plus two membrane-anchoring proteins, SdhC and SdhD. It depends on heme as a cofactor.

The protein resides in the cell membrane. Its pathway is carbohydrate metabolism; tricarboxylic acid cycle. Functionally, membrane-anchoring subunit of succinate dehydrogenase (SDH). The polypeptide is Succinate dehydrogenase hydrophobic membrane anchor subunit (sdhD) (Thermoplasma acidophilum (strain ATCC 25905 / DSM 1728 / JCM 9062 / NBRC 15155 / AMRC-C165)).